The chain runs to 229 residues: Large ribosomal subunit protein uL1 (229 aa).

This sequence belongs to the universal ribosomal protein uL1 family. As to quaternary structure, part of the 50S ribosomal subunit.

Its function is as follows. Binds directly to 23S rRNA. The L1 stalk is quite mobile in the ribosome, and is involved in E site tRNA release. Protein L1 is also a translational repressor protein, it controls the translation of the L11 operon by binding to its mRNA. This chain is Large ribosomal subunit protein uL1, found in Clostridium perfringens (strain ATCC 13124 / DSM 756 / JCM 1290 / NCIMB 6125 / NCTC 8237 / Type A).